The following is a 125-amino-acid chain: uncharacterized protein (125 aa).

This is an uncharacterized protein from Escherichia coli (strain K12).